We begin with the raw amino-acid sequence, 789 residues long: Spermatogenesis-associated protein 20 (789 aa).

The segment covering 1-19 has biased composition (basic residues); it reads MSHHSPPPPKHKGEHKGHG. The disordered stretch occupies residues 1-65; it reads MSHHSPPPPK…CPPPAPQKTA (65 aa). Phosphoserine is present on residues serine 5 and serine 652.

In terms of tissue distribution, testis-specific and age-dependent (at protein level). Highly expressed. Expressed in round spermatids located in the inner half-layer of the seminiferous epithelium as well as in early elongated spermatids having cytoplasmic protrusions into the tubular lumen.

The protein resides in the secreted. Functionally, may play a role in fertility regulation. This chain is Spermatogenesis-associated protein 20 (Spata20), found in Rattus norvegicus (Rat).